A 161-amino-acid polypeptide reads, in one-letter code: V-type proton ATPase 16 kDa proteolipid subunit c 2 (161 aa).

At 1 to 15 the chain is on the lumenal side; the sequence is MSYDLETAEHAAYAP. Residues 16–36 form a helical membrane-spanning segment; sequence FFGYMGAASAQIFTVLGAAYG. Residues 37–58 lie on the Cytoplasmic side of the membrane; sequence TAKSAVGICSMGVMRPELIMKS. The chain crosses the membrane as a helical span at residues 59 to 79; it reads VIPVIMAGIIGIYGLVVAMVL. Residues 80 to 98 are Lumenal-facing; the sequence is KGKVQAASAGYDLNKGFAH. A helical transmembrane segment spans residues 99-119; sequence LAAGLTCGLCGLGAGYAIGIV. Residues 120–137 lie on the Cytoplasmic side of the membrane; that stretch reads GDAGVRGTAQQPRLFVGM. The helical transmembrane segment at 138–158 threads the bilayer; sequence ILILIFSEVLGLYGMIVALIL. Residues 159–161 lie on the Lumenal side of the membrane; sequence GTS.

Belongs to the V-ATPase proteolipid subunit family. V-ATPase is a heteromultimeric enzyme made up of two complexes: the ATP-hydrolytic V1 complex and the proton translocation V0 complex. The V1 complex consists of three catalytic AB heterodimers that form a heterohexamer, three peripheral stalks each consisting of EG heterodimers, one central rotor including subunits D and F, and the regulatory subunits C and H. The proton translocation complex V0 consists of the proton transport subunit a, a ring of proteolipid subunits c9c'', rotary subunit d, subunits e and f, and the accessory subunits vah-19/Ac45 and vah-20/PRR.

It is found in the membrane. In terms of biological role, proton-conducting pore forming subunit of the V0 complex of vacuolar(H+)-ATPase (V-ATPase), a multisubunit enzyme composed of a peripheral complex (V1) that hydrolyzes ATP and a membrane integral complex (V0) that translocates protons. V-ATPase is responsible for acidifying and maintaining the pH of intracellular compartments and in some cell types, is targeted to the plasma membrane, where it is responsible for acidifying the extracellular environment. Involved in necrotic cell death. Required along with other vacuolar ATPase components for the removal of protein aggregates which form in immature oocytes in the distal gonad. This removal occurs as the oocytes mature and move to the proximal gonad, is triggered by the introduction of sperm through mating and occurs before fertilization. The introduction of sperm triggers V-ATPase accumulation in proximal oocytes and induces lysosomal acidification which leads to engulfing of protein aggregates by lysosomes and subsequent clearance of the aggregates. Lysosomal acidification also leads to changes in mitochondrial morphology and function. Mitochondria in distal immature oocytes are fragmented, produce high levels of reactive oxygen species (ROS) and have high membrane potential, indicative of metabolic inactivity. In contrast, mitochondria in proximal mature oocytes are tubular with lower ROS levels and membrane potential, indicative of an active metabolic state required for aggregate mobilization before clearance. The sequence is that of V-type proton ATPase 16 kDa proteolipid subunit c 2 from Caenorhabditis briggsae.